The chain runs to 289 residues: Small ribosomal subunit protein uS2C (289 aa).

It belongs to the universal ribosomal protein uS2 family. In terms of assembly, component of the small ribosomal subunit. Mature ribosomes consist of a small (40S) and a large (60S) subunit. The 40S subunit contains about 33 different proteins and 1 molecule of RNA (18S). The 60S subunit contains about 49 different proteins and 3 molecules of RNA (25S, 5.8S and 5S). Interacts with rps21.

It localises to the cytoplasm. Required for the assembly and/or stability of the 40S ribosomal subunit. Required for the processing of the 20S rRNA-precursor to mature 18S rRNA in a late step of the maturation of 40S ribosomal subunits. In Schizosaccharomyces japonicus (strain yFS275 / FY16936) (Fission yeast), this protein is Small ribosomal subunit protein uS2C (rps0c).